The sequence spans 543 residues: MFSLQELCRKNIYILPYPLGKHVLQQLGLYWKGHGSLQRIGDDHVLLQQDLIFSINEALRMAGEEGNNEVVKLLLLWEGNLHYAIIGALEGDRYDLIHKYYDQIGDCHKILPLIQDPQIFEKCHELSNSCNIRCLLEHAVKHDMLSILQKHKEQIRLHLALTQILFELACHERKNDIIRWIGYSLHIHHLETIFDVAFAHKNLSLYVLGYELLMHKVNTEAAYIELPNLLSYHLRTAAAGGLLNFMLETIKHGGYVDKTVLSAAIRYKHRKIVAHFIHQVPRKTVKKLLLYAVQARAPKKTLNLLLSSLNYSVHTITKQLVHNVVIYSSTLIVKLLLMRRKNKLNLVDAVLARLVKYSTYTDIVQFMSEFSVSPERVIKMAARESRTFLIEMISKAAWGNHPQTLIHHLKQLAHTMKSQSGKDLIIYTIHYIYLNSNMLVAEEEKNIFKLAKFYANHNAVNRFKQVCEDYYALDVDARFKTLILECFEIAVQKNYPRIANIVDDYVRFLFYRGDITEEEIHEAYSLKDAEFYVDLKWLQHDLF.

This sequence belongs to the asfivirus MGF 505 family.

Its function is as follows. Plays a role in virus cell tropism, and may be required for efficient virus replication in macrophages. This African swine fever virus (isolate Tick/South Africa/Pretoriuskop Pr4/1996) (ASFV) protein is Protein MGF 505-10R.